Here is a 196-residue protein sequence, read N- to C-terminus: Heat shock protein beta-8 (196 aa).

The segment at 1–34 (MADGQMPFPCHYTSRRRRDPFRDSPLSSRLLDDG) is disordered. Over residues 23 to 34 (DSPLSSRLLDDG) the composition is skewed to low complexity. Residues Ser24 and Ser57 each carry the phosphoserine modification. Position 63 is a phosphothreonine (Thr63). Arg71 and Arg78 each carry asymmetric dimethylarginine. A sHSP domain is found at 74-185 (TAMTRFGVPA…PFGESSFNNE (112 aa)). Ser87 is modified (phosphoserine). Positions 176–196 (PFGESSFNNELPQDGQEVTCT) are disordered. Over residues 178-196 (GESSFNNELPQDGQEVTCT) the composition is skewed to polar residues.

The protein belongs to the small heat shock protein (HSP20) family. Monomer. Forms a ternary complex with BAG3 and HSPA1A. Component of the chaperone-assisted selective autophagy (CASA) complex consisting of BAG3, HSPA8/HSC70, HSPB8 and STUB1/CHIP. Interacts with HSPB1. Interacts with DNAJB6. Interacts with BAG3. Post-translationally, phosphorylated.

It localises to the cytoplasm. The protein localises to the nucleus. In terms of biological role, involved in the chaperone-assisted selective autophagy (CASA), a crucial process for protein quality control, particularly in mechanical strained cells and tissues such as muscle. Displays temperature-dependent chaperone activity. This Bos taurus (Bovine) protein is Heat shock protein beta-8 (HSPB8).